The following is a 334-amino-acid chain: L-lactate dehydrogenase B-B chain (334 aa).

Residues 30–58 and Arg100 contribute to the NAD(+) site; that span reads GQVG…VEDK. Arg107, Asn139, and Arg170 together coordinate substrate. Asn139 provides a ligand contact to NAD(+). The active-site Proton acceptor is the His194. Thr249 provides a ligand contact to substrate.

This sequence belongs to the LDH/MDH superfamily. LDH family. As to quaternary structure, homotetramer.

Its subcellular location is the cytoplasm. It carries out the reaction (S)-lactate + NAD(+) = pyruvate + NADH + H(+). It participates in fermentation; pyruvate fermentation to lactate; (S)-lactate from pyruvate: step 1/1. The protein is L-lactate dehydrogenase B-B chain of Danio rerio (Zebrafish).